The sequence spans 497 residues: Probable malate:quinone oxidoreductase (497 aa).

Belongs to the MQO family. FAD is required as a cofactor.

It catalyses the reaction (S)-malate + a quinone = a quinol + oxaloacetate. The protein operates within carbohydrate metabolism; tricarboxylic acid cycle; oxaloacetate from (S)-malate (quinone route): step 1/1. This chain is Probable malate:quinone oxidoreductase, found in Prochlorococcus marinus (strain MIT 9515).